The sequence spans 131 residues: Large ribosomal subunit protein uL22 (131 aa).

The segment covering 1–11 (MAKGHRSKIKR) has biased composition (basic residues). A disordered region spans residues 1 to 20 (MAKGHRSKIKRERNEVRDTR).

It belongs to the universal ribosomal protein uL22 family. Part of the 50S ribosomal subunit.

Its function is as follows. This protein binds specifically to 23S rRNA; its binding is stimulated by other ribosomal proteins, e.g. L4, L17, and L20. It is important during the early stages of 50S assembly. It makes multiple contacts with different domains of the 23S rRNA in the assembled 50S subunit and ribosome. The globular domain of the protein is located near the polypeptide exit tunnel on the outside of the subunit, while an extended beta-hairpin is found that lines the wall of the exit tunnel in the center of the 70S ribosome. The sequence is that of Large ribosomal subunit protein uL22 from Agathobacter rectalis (strain ATCC 33656 / DSM 3377 / JCM 17463 / KCTC 5835 / VPI 0990) (Eubacterium rectale).